The chain runs to 3179 residues: Guanylate cyclase beta (3179 aa).

Residues Met-1–Leu-60 are Cytoplasmic-facing. Residues Ile-61 to Ile-81 form a helical membrane-spanning segment. The Extracellular segment spans residues Asn-82–Lys-88. The chain crosses the membrane as a helical span at residues Tyr-89–Glu-109. The Cytoplasmic portion of the chain corresponds to Ser-110–Tyr-295. Residues Tyr-296 to Phe-316 form a helical membrane-spanning segment. Residues His-317 to Ser-328 are Extracellular-facing. Residues Phe-329–Tyr-349 traverse the membrane as a helical segment. Over Ser-350–Lys-988 the chain is Cytoplasmic. Residues Val-989–Phe-1009 traverse the membrane as a helical segment. Over Asp-1010–Ser-1020 the chain is Extracellular. A helical transmembrane segment spans residues Ile-1021–Ala-1041. The Cytoplasmic segment spans residues Tyr-1042 to Asn-1069. Residues Asn-1070–Leu-1090 form a helical membrane-spanning segment. At Arg-1091–Glu-1102 the chain is on the extracellular side. The chain crosses the membrane as a helical span at residues Phe-1103–Ser-1123. Topologically, residues Lys-1124–His-1127 are cytoplasmic. Residues Ile-1128–Phe-1148 form a helical membrane-spanning segment. Over Thr-1149 to Asn-1168 the chain is Extracellular. The helical transmembrane segment at Ile-1169–Met-1189 threads the bilayer. Residues Lys-1190 to Arg-1304 are Cytoplasmic-facing. A helical transmembrane segment spans residues Ile-1305 to Asp-1325. The Extracellular segment spans residues Ile-1326 to Asn-1331. A helical membrane pass occupies residues Ile-1332–Tyr-1352. Topologically, residues Ile-1353–Thr-1360 are cytoplasmic. The chain crosses the membrane as a helical span at residues Ser-1361 to Tyr-1381. Over Asp-1382 to Tyr-1401 the chain is Extracellular. The N-linked (GlcNAc...) asparagine glycan is linked to Asn-1383. A helical membrane pass occupies residues Ile-1402–Leu-1422. Topologically, residues Thr-1423–Gln-1464 are cytoplasmic. The helical transmembrane segment at Ile-1465–Tyr-1485 threads the bilayer. Topologically, residues Glu-1486–Gln-1507 are extracellular. Residues Ile-1508–Pro-1528 traverse the membrane as a helical segment. The Cytoplasmic portion of the chain corresponds to Lys-1529–Leu-2739. A Guanylate cyclase 1 domain is found at Ser-1548–Lys-1700. Disordered stretches follow at residues Leu-2123–Ser-2153, Ser-2355–Lys-2379, and Lys-2576–Ser-2656. A compositionally biased stretch (basic residues) spans Asn-2131–Val-2142. Residues Asn-2584 to Ile-2607 show a composition bias toward low complexity. Basic residues predominate over residues His-2614 to His-2645. Residues Ile-2740–Phe-2760 traverse the membrane as a helical segment. The Extracellular segment spans residues Tyr-2761–Ser-2770. A glycan (N-linked (GlcNAc...) asparagine) is linked at Asn-2768. A helical transmembrane segment spans residues Ile-2771–Ile-2791. At Leu-2792 to Thr-2809 the chain is on the cytoplasmic side. A helical membrane pass occupies residues Ile-2810 to Ile-2830. Residues His-2831–Arg-2842 lie on the Extracellular side of the membrane. Residues Ala-2843–Lys-2863 traverse the membrane as a helical segment. Residues Asn-2864–Lys-2870 are Cytoplasmic-facing. A helical membrane pass occupies residues Phe-2871 to Ile-2891. The Extracellular portion of the chain corresponds to His-2892 to Gln-2895. Residues Thr-2896 to Ser-2916 traverse the membrane as a helical segment. Over Glu-2917–Ser-3179 the chain is Cytoplasmic. Residues Ala-2968–Glu-3102 enclose the Guanylate cyclase 2 domain. Residues Asp-2973, Ile-2974, and Asp-3017 each coordinate Mg(2+).

In the N-terminal section; belongs to the cation transport ATPase (P-type) (TC 3.A.3) family. Type IV subfamily. The protein in the C-terminal section; belongs to the adenylyl cyclase class-4/guanylyl cyclase family. The cofactor is Mg(2+). Mn(2+) is required as a cofactor.

The protein localises to the membrane. It carries out the reaction GTP = 3',5'-cyclic GMP + diphosphate. Its activity is regulated as follows. Basal guanylate activity of the recombinant guanylate cyclase domains 1 and 2 is not modulated by an increase in Ca(2+) levels or by the gametogenesis inducer xanthurenic acid. Catalyzes the synthesis of the second messenger cGMP from GTP. Regulates cGMP production in gametocytes; however, is dispensable for the initiation of gametogenesis. Does not have adenylate cyclase activity. The sequence is that of Guanylate cyclase beta from Plasmodium falciparum (isolate 3D7).